The chain runs to 322 residues: Ribosome biogenesis protein RLP7 (322 aa).

Polar residues predominate over residues 1–16; the sequence is MSSTQDSKAQTLNSNP. The disordered stretch occupies residues 1–52; it reads MSSTQDSKAQTLNSNPEILLRKRRNADRTRIERQELAKKKREEQIKKKRSNK. Position 2 is an N-acetylserine (Ser2). The residue at position 14 (Ser14) is a Phosphoserine. A compositionally biased stretch (basic and acidic residues) spans 26-45; that stretch reads ADRTRIERQELAKKKREEQI. A Phosphothreonine modification is found at Thr120. Ser278 carries the phosphoserine modification.

This sequence belongs to the universal ribosomal protein uL30 family.

Its subcellular location is the nucleus. It is found in the nucleolus. Functionally, involved in the biogenesis of the 60S ribosomal subunit. May act as a specificity factor that binds precursor rRNAs and tethers the enzymes that carry out the early 5' to 3' exonucleolytic reactions that generate the mature rRNAs. The chain is Ribosome biogenesis protein RLP7 (RLP7) from Saccharomyces cerevisiae (strain ATCC 204508 / S288c) (Baker's yeast).